A 131-amino-acid chain; its full sequence is Protein FAM107B (131 aa).

Position 2 is an N-acetylalanine (Ala-2). A disordered region spans residues 39 to 79 (MNQKRGLAPQNKPELQKVMEKRRRDQVIKQKEEEAQKKKSD). Lys-50 is subject to N6-acetyllysine. Positions 52-79 (ELQKVMEKRRRDQVIKQKEEEAQKKKSD) are enriched in basic and acidic residues. The stretch at 61-112 (RRDQVIKQKEEEAQKKKSDLEIELLKRQQKLEQLELEKQKLQEEQENAPEFV) forms a coiled coil.

The protein belongs to the FAM107 family. In terms of tissue distribution, expressed in the hippocampus and hypothalamus. Expressed in the pontine nuclei and reticulotegmental nucleus. Expressed in Purkinje cell and nuclear layers of the cerebelum. Expressed in the choroid plexus. Expressed in hippocampal granule neurons of the dente gyrus.

The chain is Protein FAM107B from Mus musculus (Mouse).